A 247-amino-acid polypeptide reads, in one-letter code: Ras-like protein family member 11B (247 aa).

The interval 29–247 (ASSRVIKIAV…SAKVRTATSV (219 aa)) is small GTPase-like. Residues 40-47 (GGSGVGKT), 87-91 (DTPGV), and 152-155 (NKAD) each bind GTP. The disordered stretch occupies residues 205–228 (QNTGTPERRKNSLIPRPKSPNMQD).

This sequence belongs to the small GTPase superfamily. Ras family.

The enzyme catalyses GTP + H2O = GDP + phosphate + H(+). The polypeptide is Ras-like protein family member 11B (Xenopus tropicalis (Western clawed frog)).